Here is an 89-residue protein sequence, read N- to C-terminus: Small ribosomal subunit protein bS18 (89 aa).

The protein belongs to the bacterial ribosomal protein bS18 family. Part of the 30S ribosomal subunit. Forms a tight heterodimer with protein bS6.

Its function is as follows. Binds as a heterodimer with protein bS6 to the central domain of the 16S rRNA, where it helps stabilize the platform of the 30S subunit. The protein is Small ribosomal subunit protein bS18 of Phocaeicola vulgatus (strain ATCC 8482 / DSM 1447 / JCM 5826 / CCUG 4940 / NBRC 14291 / NCTC 11154) (Bacteroides vulgatus).